Consider the following 314-residue polypeptide: Glutamyl-Q tRNA(Asp) synthetase (314 aa).

Residues 14–18 (RFAPS) and glutamate 50 contribute to the L-glutamate site. The 'HIGH' region signature appears at 17–27 (PSPTGPLHVGS). The Zn(2+) site is built by cysteine 106, cysteine 108, tyrosine 129, and cysteine 133. Residues tyrosine 187 and arginine 205 each coordinate L-glutamate. The 'KMSKS' region signature appears at 243-247 (KLSKR). Residue lysine 246 coordinates ATP.

This sequence belongs to the class-I aminoacyl-tRNA synthetase family. GluQ subfamily. Zn(2+) serves as cofactor.

Its function is as follows. Catalyzes the tRNA-independent activation of glutamate in presence of ATP and the subsequent transfer of glutamate onto a tRNA(Asp). Glutamate is transferred on the 2-amino-5-(4,5-dihydroxy-2-cyclopenten-1-yl) moiety of the queuosine in the wobble position of the QUC anticodon. This is Glutamyl-Q tRNA(Asp) synthetase from Geobacter sulfurreducens (strain ATCC 51573 / DSM 12127 / PCA).